Reading from the N-terminus, the 1028-residue chain is Serine/threonine-protein kinase fray2 (1028 aa).

A disordered region spans residues Met-1–Ser-67. A compositionally biased stretch (low complexity) spans Lys-20–Ser-54. The Protein kinase domain occupies Tyr-71 to Phe-330. ATP contacts are provided by residues Ile-77–Val-85 and Lys-100. Catalysis depends on Asp-195, which acts as the Proton acceptor. Thr-230 is modified (phosphothreonine; by autocatalysis). Polar residues predominate over residues Thr-368–Ala-381. Disordered stretches follow at residues Thr-368–Val-467, Ala-486–Pro-561, and Asp-580–Lys-914. Low complexity-rich tracts occupy residues Pro-387–Asn-419 and Thr-432–Thr-458. Polar residues-rich tracts occupy residues Ile-503–Ser-518 and Ile-528–Asn-542. Over residues Thr-543–Pro-561 the composition is skewed to low complexity. Polar residues predominate over residues Ile-595–Leu-616. Low complexity-rich tracts occupy residues Gln-617–Asn-642 and Ser-683–Ser-700. Basic and acidic residues-rich tracts occupy residues Ser-701–Lys-714, Ser-728–Asn-742, Val-753–Arg-855, and Ser-865–Ser-893.

Belongs to the protein kinase superfamily. STE Ser/Thr protein kinase family. STE20 subfamily. The cofactor is Mn(2+). Post-translationally, undergoes autophosphorylation in the catalytic domain.

It catalyses the reaction L-seryl-[protein] + ATP = O-phospho-L-seryl-[protein] + ADP + H(+). The catalysed reaction is L-threonyl-[protein] + ATP = O-phospho-L-threonyl-[protein] + ADP + H(+). The polypeptide is Serine/threonine-protein kinase fray2 (Dictyostelium discoideum (Social amoeba)).